The primary structure comprises 1025 residues: Rho GTPase-activating protein Graf (1025 aa).

Residues 271–388 (IFTKRGYLFL…WISAMDGTEP (118 aa)) form the PH domain. Residues 402–589 (YHLDEAGFMF…ILIDNYERIF (188 aa)) enclose the Rho-GAP domain. Residues 824 to 866 (GSASGPQQHPPVQRGLHSYGQTKHYSPLMPTSTSSSNDSVCDS) form a disordered region. The span at 854–866 (TSTSSSNDSVCDS) shows a compositional bias: low complexity. Residues 963-1023 (TGTARVRTLY…PENYVEHLKP (61 aa)) form the SH3 domain.

As to quaternary structure, interacts with Egfr (when ubiquitinated). As to expression, in the adult brain, expressed in the antennal lobe, the subesophageal ganglion and the alpha/beta neurons of the mushroom body.

It is found in the cytoplasm. Its subcellular location is the cytosol. It localises to the cytoplasmic vesicle. GTPase-activating protein for Rho family proteins. Essential component of the CLIC (clathrin-independent carrier)/GEEC (GPI-anchored protein-enriched early endocytic compartment) endocytic pathway. During hematopoiesis, inhibits Egfr-ras-MAPK signaling by promoting Spi-induced Egfr internalization through CLIC/GEEC endocytosis, thereby preventing plasmatocyte overproliferation. Essential for normal mushroom body (MB) development and consequently the formation of olfactory long-term memories. During MD development, required to stop the MB beta-lobe from crossing the brain midline, possibly acting via its role in the CLIC/GEEC endocytic pathway to down-regulate the Egfr-ras-MAPK signaling at the tip of the beta-lobes. Required during embryo cellularization for maintaining and regulating the rate of actomyosin ring constriction. During cellularization, inhibits Rho-GTP levels at the furrow canal tip in a spatiotemporal manner, thus delaying the onset of actomyosin contraction and ensuring appropriate closure of the cells at the base of nuclei after membrane extension. The polypeptide is Rho GTPase-activating protein Graf (Drosophila melanogaster (Fruit fly)).